Here is a 375-residue protein sequence, read N- to C-terminus: Methylthioribose-1-phosphate isomerase (375 aa).

Substrate-binding positions include 53-55 (RGA), R90, and Q202. The active-site Proton donor is the D243. Residue 253–254 (NK) participates in substrate binding.

This sequence belongs to the eIF-2B alpha/beta/delta subunits family. MtnA subfamily.

It catalyses the reaction 5-(methylsulfanyl)-alpha-D-ribose 1-phosphate = 5-(methylsulfanyl)-D-ribulose 1-phosphate. It participates in amino-acid biosynthesis; L-methionine biosynthesis via salvage pathway; L-methionine from S-methyl-5-thio-alpha-D-ribose 1-phosphate: step 1/6. Catalyzes the interconversion of methylthioribose-1-phosphate (MTR-1-P) into methylthioribulose-1-phosphate (MTRu-1-P). The polypeptide is Methylthioribose-1-phosphate isomerase (Rhodospirillum centenum (strain ATCC 51521 / SW)).